The sequence spans 673 residues: Ion-translocating oxidoreductase complex subunit C (673 aa).

4Fe-4S ferredoxin-type domains lie at 368-397 (MGAP…QQLY) and 407-436 (KATA…VQYF). [4Fe-4S] cluster is bound by residues cysteine 377, cysteine 380, cysteine 383, cysteine 387, cysteine 416, cysteine 419, cysteine 422, and cysteine 426. Disordered regions lie at residues 534–553 (QARA…SGGA) and 563–653 (IARA…AAVA).

This sequence belongs to the 4Fe4S bacterial-type ferredoxin family. RnfC subfamily. The complex is composed of six subunits: RsxA, RsxB, RsxC, RsxD, RsxE and RsxG. [4Fe-4S] cluster serves as cofactor.

The protein localises to the cell inner membrane. In terms of biological role, part of a membrane-bound complex that couples electron transfer with translocation of ions across the membrane. Required to maintain the reduced state of SoxR. This Salmonella gallinarum (strain 287/91 / NCTC 13346) protein is Ion-translocating oxidoreductase complex subunit C.